The sequence spans 345 residues: N-glycosylase/DNA lyase (345 aa).

Positions 149, 154, and 204 each coordinate DNA. Catalysis depends on Lys249, which acts as the Schiff-base intermediate with DNA. Positions 266 and 268 each coordinate 8-oxoguanine. Residues His270 and Gln287 each coordinate DNA. 8-oxoguanine is bound by residues Gln315 and Phe319. Over residues 324-334 (RQSRHAQEPPA) the composition is skewed to basic and acidic residues. Residues 324–345 (RQSRHAQEPPAKRRKGSKGPEG) form a disordered region. The span at 335 to 345 (KRRKGSKGPEG) shows a compositional bias: basic residues.

It belongs to the type-1 OGG1 family. Ubiquitous.

The protein resides in the nucleus. It localises to the nucleoplasm. Its subcellular location is the nucleus speckle. The protein localises to the nucleus matrix. It is found in the mitochondrion. The enzyme catalyses 2'-deoxyribonucleotide-(2'-deoxyribose 5'-phosphate)-2'-deoxyribonucleotide-DNA = a 3'-end 2'-deoxyribonucleotide-(2,3-dehydro-2,3-deoxyribose 5'-phosphate)-DNA + a 5'-end 5'-phospho-2'-deoxyribonucleoside-DNA + H(+). Functionally, DNA repair enzyme that incises DNA at 8-oxoG residues. Excises 7,8-dihydro-8-oxoguanine and 2,6-diamino-4-hydroxy-5-N-methylformamidopyrimidine (FAPY) from damaged DNA. Has a beta-lyase activity that nicks DNA 3' to the lesion. This chain is N-glycosylase/DNA lyase (OGG1), found in Homo sapiens (Human).